An 86-amino-acid chain; its full sequence is UPF0147 protein PYRAB16980 (86 aa).

This sequence belongs to the UPF0147 family.

This Pyrococcus abyssi (strain GE5 / Orsay) protein is UPF0147 protein PYRAB16980.